The following is a 105-amino-acid chain: Nucleoid-associated protein cu1912 (105 aa).

It belongs to the YbaB/EbfC family. In terms of assembly, homodimer.

It localises to the cytoplasm. The protein resides in the nucleoid. Its function is as follows. Binds to DNA and alters its conformation. May be involved in regulation of gene expression, nucleoid organization and DNA protection. The sequence is that of Nucleoid-associated protein cu1912 from Corynebacterium urealyticum (strain ATCC 43042 / DSM 7109).